Reading from the N-terminus, the 380-residue chain is Cytochrome b (380 aa).

4 helical membrane-spanning segments follow: residues 34–54 (FGSL…LLAM), 78–99 (WLIR…YMHI), 114–134 (WNTG…GYVL), and 179–199 (FFAL…IHLT). Residues H84 and H98 each contribute to the heme b site. H183 and H197 together coordinate heme b. Residue H202 coordinates a ubiquinone. Transmembrane regions (helical) follow at residues 227–247 (SKDI…ALFS), 289–309 (LGGV…PFLH), 321–341 (LSQM…WIGS), and 348–368 (FIII…ILLP).

It belongs to the cytochrome b family. As to quaternary structure, the cytochrome bc1 complex contains 11 subunits: 3 respiratory subunits (MT-CYB, CYC1 and UQCRFS1), 2 core proteins (UQCRC1 and UQCRC2) and 6 low-molecular weight proteins (UQCRH/QCR6, UQCRB/QCR7, UQCRQ/QCR8, UQCR10/QCR9, UQCR11/QCR10 and a cleavage product of UQCRFS1). This cytochrome bc1 complex then forms a dimer. Requires heme b as cofactor.

Its subcellular location is the mitochondrion inner membrane. Functionally, component of the ubiquinol-cytochrome c reductase complex (complex III or cytochrome b-c1 complex) that is part of the mitochondrial respiratory chain. The b-c1 complex mediates electron transfer from ubiquinol to cytochrome c. Contributes to the generation of a proton gradient across the mitochondrial membrane that is then used for ATP synthesis. This is Cytochrome b (MT-CYB) from Caracara plancus (Southern caracara).